The primary structure comprises 900 residues: Bifunctional uridylyltransferase/uridylyl-removing enzyme (900 aa).

A uridylyltransferase region spans residues 1–342 (MPQVDPELFD…WEGESGPIVP (342 aa)). The uridylyl-removing stretch occupies residues 343 to 705 (LNSRFQVRDG…TTQREFEGGT (363 aa)). Residues 461-583 (VDAHTLNVIK…VGDETHLDYL (123 aa)) form the HD domain. ACT domains are found at residues 706–789 (QIFI…IIQR) and 816–896 (ILEI…PSPS).

The protein belongs to the GlnD family. Requires Mg(2+) as cofactor.

The catalysed reaction is [protein-PII]-L-tyrosine + UTP = [protein-PII]-uridylyl-L-tyrosine + diphosphate. It carries out the reaction [protein-PII]-uridylyl-L-tyrosine + H2O = [protein-PII]-L-tyrosine + UMP + H(+). Uridylyltransferase (UTase) activity is inhibited by glutamine, while glutamine activates uridylyl-removing (UR) activity. Modifies, by uridylylation and deuridylylation, the PII regulatory proteins (GlnB and homologs), in response to the nitrogen status of the cell that GlnD senses through the glutamine level. Under low glutamine levels, catalyzes the conversion of the PII proteins and UTP to PII-UMP and PPi, while under higher glutamine levels, GlnD hydrolyzes PII-UMP to PII and UMP (deuridylylation). Thus, controls uridylylation state and activity of the PII proteins, and plays an important role in the regulation of nitrogen fixation and metabolism. The protein is Bifunctional uridylyltransferase/uridylyl-removing enzyme of Stutzerimonas stutzeri (strain A1501) (Pseudomonas stutzeri).